The sequence spans 486 residues: Cardiolipin synthase A (486 aa).

2 helical membrane passes run 3–23 and 38–58; these read TFYT…IAGV and MAWL…YLSV. PLD phosphodiesterase domains lie at 219-246 and 399-426; these read MDLR…VDPR and EGGL…DMRS. Residues histidine 224, lysine 226, aspartate 231, histidine 404, lysine 406, and aspartate 411 contribute to the active site.

It belongs to the phospholipase D family. Cardiolipin synthase subfamily. ClsA sub-subfamily.

It is found in the cell inner membrane. It carries out the reaction 2 a 1,2-diacyl-sn-glycero-3-phospho-(1'-sn-glycerol) = a cardiolipin + glycerol. Catalyzes the reversible phosphatidyl group transfer from one phosphatidylglycerol molecule to another to form cardiolipin (CL) (diphosphatidylglycerol) and glycerol. This Salmonella paratyphi A (strain ATCC 9150 / SARB42) protein is Cardiolipin synthase A.